A 47-amino-acid chain; its full sequence is Small, acid-soluble spore protein N (47 aa).

A compositionally biased stretch (basic residues) spans 1–12 (MSNPKGSRKHFV). The tract at residues 1-47 (MSNPKGSRKHFVPNHIGTQPRAAGGNKGKQMQDQSGQHAQVIQTKGE) is disordered. Residues 29–47 (KQMQDQSGQHAQVIQTKGE) show a composition bias toward polar residues.

This sequence belongs to the SspN family.

It localises to the spore core. This is Small, acid-soluble spore protein N from Geobacillus kaustophilus (strain HTA426).